The following is a 104-amino-acid chain: Hydrogen cyanide synthase subunit HcnA (104 aa).

Positions 16-97 constitute a 2Fe-2S ferredoxin-type domain; sequence ADMTIHLNGQ…GMRVETESNR (82 aa). Positions 60, 65, 68, and 81 each coordinate [2Fe-2S] cluster.

Heterotrimer of HcnA, HcnB and HcnC.

The protein localises to the cell membrane. The catalysed reaction is glycine + 2 A = hydrogen cyanide + 2 AH2 + CO2. Oxygen is necessary for cyanogenesis. Activated by succinate, glycine methyl ester, glucose and D,L-methionine in addition to glycine. Phenazine methosulfate, methylene blue, 2,6-dichlorophenolindophenol (DCIP) and ferricyanide can replace oxygen for the reaction. Inhibited by pyrrolnitrin and acriflavine at 1 mM concentration. Its function is as follows. A three-component membrane-bound flavoenzyme that catalyzes the formation of hydrogen cyanide, a secondary metabolite, by transfer of electrons to a cyanide-resistant branch of the aerobic respiratory chain. The protein is Hydrogen cyanide synthase subunit HcnA of Pseudomonas aeruginosa (strain ATCC 15692 / DSM 22644 / CIP 104116 / JCM 14847 / LMG 12228 / 1C / PRS 101 / PAO1).